The following is a 159-amino-acid chain: Ribosomal RNA large subunit methyltransferase H (159 aa).

S-adenosyl-L-methionine contacts are provided by residues leucine 76, glycine 108, and 127–132 (LSKMTF).

Belongs to the RNA methyltransferase RlmH family. As to quaternary structure, homodimer.

It localises to the cytoplasm. The catalysed reaction is pseudouridine(1915) in 23S rRNA + S-adenosyl-L-methionine = N(3)-methylpseudouridine(1915) in 23S rRNA + S-adenosyl-L-homocysteine + H(+). In terms of biological role, specifically methylates the pseudouridine at position 1915 (m3Psi1915) in 23S rRNA. The protein is Ribosomal RNA large subunit methyltransferase H of Ureaplasma urealyticum serovar 10 (strain ATCC 33699 / Western).